A 169-amino-acid chain; its full sequence is uncharacterized protein (169 aa).

Positions 144 to 157 (AEAHSASPASSDSS) are enriched in low complexity. The interval 144–169 (AEAHSASPASSDSSPLTNNIRPISIM) is disordered. Residues 158-169 (PLTNNIRPISIM) show a composition bias toward polar residues.

This is an uncharacterized protein from Saccharomyces cerevisiae (strain ATCC 204508 / S288c) (Baker's yeast).